Consider the following 36-residue polypeptide: uncharacterized protein (36 aa).

The protein localises to the mitochondrion. This is an uncharacterized protein from Saccharomyces cerevisiae (strain ATCC 204508 / S288c) (Baker's yeast).